The sequence spans 175 residues: Ribosome maturation factor RimM (175 aa).

The region spanning 95-175 (SEDEFYWREL…RIEVDWDPGF (81 aa)) is the PRC barrel domain.

The protein belongs to the RimM family. In terms of assembly, binds ribosomal protein uS19.

The protein resides in the cytoplasm. Functionally, an accessory protein needed during the final step in the assembly of 30S ribosomal subunit, possibly for assembly of the head region. Essential for efficient processing of 16S rRNA. May be needed both before and after RbfA during the maturation of 16S rRNA. It has affinity for free ribosomal 30S subunits but not for 70S ribosomes. This is Ribosome maturation factor RimM from Aliivibrio fischeri (strain MJ11) (Vibrio fischeri).